Consider the following 906-residue polypeptide: MLSLVQKIIGSRNERFIKKVSRIVQKINSLEPEFEKLSDEQLKAKTFEYRERLANGEILDNLLPEAFATVREAGKRTKNMRHYDVQLIGGIVLHQGKVAEMRTGEGKTLVATLPAYLNALTGDGVHVITVNDYLAKRDAELMSDIYEFLGMSVGVIVADLNPQQRKEAYACDITYGTNNEFGFDYLRDNMAYEKEQQVQRSRNYVIIDEVDSILIDEARTPLIISGASDDSSEMYNLFNRLVPYLEKQEKEEVENEQEQRDFYVDEKSKNAYLTEKGYAKIENMLKKEGILEEDDNLYSPHNITKMHYLNACLRAHSLYQLNIDYIVRDQEIVIIDESTGRAMPGRRWSDGLHQAIEAKEGVKVNAENQTMASITFQNFFKLYNKIAGMTGTADTEAFELHSIYGLEVIIIPTNKPMIRKDHHDEIYGSVSEKFDAIVEDIKERISKGQPVLVGTASIEASEVLSTLLKKKKIRHNVLNAKQHEKEASIIAMAGYPDNVTIATNMAGRGTDIILGGNLEVEIAQLEDPTPEDIAQIKAEWLKRNEAVKKAGGLCIIGSERHDSRRIDNQLRGRAARQGDPGESKFYLSMDDNLLRIFASQSMAERVKKGLKGGESLAFGFMSKVISKAQGKVESYHFDIRKNLLEYDNVVNTQRKVIYEQRQSFLEAEDVSDILADIRIDVAEQLFHDYVPAGSMHELWDLEGLEKALKSDFMIELDLQKLYEEDDSLGEEDLKRLVREAIEIEFVEKTKNLDSGAVRQFEKFSLLQSLDTHWREHLSSIDHLRNSINLRGYAQKDPKNEYKKEAFELFSTMLDNFKYEVISSLAKIRIATEEETQRAQQEWQESMSDIKAEHESVIDNNQRHDEDEQEEAPKVQQVRREGPKVKRNDPCPCGSGKKYKQCHSKVE.

Residues Gln-86, Gly-104–Thr-108, and Asp-511 contribute to the ATP site. 2 stretches are compositionally biased toward basic and acidic residues: residues His-853–Glu-865 and Val-877–Asp-888. Residues His-853–Glu-906 are disordered. 4 residues coordinate Zn(2+): Cys-890, Cys-892, Cys-901, and His-902. The segment covering Lys-896–Glu-906 has biased composition (basic residues).

This sequence belongs to the SecA family. As to quaternary structure, monomer and homodimer. Part of the essential Sec protein translocation apparatus which comprises SecA, SecYEG and auxiliary proteins SecDF-YajC and YidC. Requires Zn(2+) as cofactor.

It localises to the cell inner membrane. It is found in the cytoplasm. It carries out the reaction ATP + H2O + cellular proteinSide 1 = ADP + phosphate + cellular proteinSide 2.. Part of the Sec protein translocase complex. Interacts with the SecYEG preprotein conducting channel. Has a central role in coupling the hydrolysis of ATP to the transfer of proteins into and across the cell membrane, serving both as a receptor for the preprotein-SecB complex and as an ATP-driven molecular motor driving the stepwise translocation of polypeptide chains across the membrane. The chain is Protein translocase subunit SecA from Francisella tularensis subsp. tularensis (strain WY96-3418).